Here is a 132-residue protein sequence, read N- to C-terminus: MTMTDPIADMLSRVRNASNAHHDTVSMPSSKIKANIAEILKQEGYIANYTVEDAKVGKTLSLELKYSNTRERSIAGLRRVSKPGLRVYAKSTNLPQVLGGLGVAIISTSQGLLTDRQATEKGVGGEVLAYVW.

It belongs to the universal ribosomal protein uS8 family. As to quaternary structure, part of the 30S ribosomal subunit. Contacts proteins S5 and S12.

Functionally, one of the primary rRNA binding proteins, it binds directly to 16S rRNA central domain where it helps coordinate assembly of the platform of the 30S subunit. In Corynebacterium glutamicum (strain R), this protein is Small ribosomal subunit protein uS8.